We begin with the raw amino-acid sequence, 171 residues long: Urease accessory protein UreE (171 aa).

The disordered stretch occupies residues 143 to 171; the sequence is SGGHQHHHGHDHDHGHHGHDHDHHHPDHE. Basic and acidic residues predominate over residues 152 to 171; sequence HDHDHGHHGHDHDHHHPDHE.

The protein belongs to the UreE family.

The protein localises to the cytoplasm. In terms of biological role, involved in urease metallocenter assembly. Binds nickel. Probably functions as a nickel donor during metallocenter assembly. This chain is Urease accessory protein UreE, found in Brucella abortus biovar 1 (strain 9-941).